Reading from the N-terminus, the 118-residue chain is Small ribosomal subunit protein uS13 (118 aa).

The segment at 94–118 (SLPLRGQRTKTNARTRKGPRKPIKK) is disordered.

It belongs to the universal ribosomal protein uS13 family. As to quaternary structure, part of the 30S ribosomal subunit. Forms a loose heterodimer with protein S19. Forms two bridges to the 50S subunit in the 70S ribosome.

Its function is as follows. Located at the top of the head of the 30S subunit, it contacts several helices of the 16S rRNA. In the 70S ribosome it contacts the 23S rRNA (bridge B1a) and protein L5 of the 50S subunit (bridge B1b), connecting the 2 subunits; these bridges are implicated in subunit movement. Contacts the tRNAs in the A and P-sites. The sequence is that of Small ribosomal subunit protein uS13 from Aliivibrio fischeri (strain ATCC 700601 / ES114) (Vibrio fischeri).